The chain runs to 231 residues: MQPRVILTDIEGTTSSISFVKNVLFPYARKALPAFVAEHGQQPEVRRWLDAVATEIGGACQDSLVAETLQGWIDQDRKHTALKALQGLIWDEGYRRGDYTAHFYPEVAPVLKGWHASGLPLYVYSSGSVPAQKLFFGFSDAGDLSPLVSGWFDTEIGGKREADSYRRIVQAIDVPAGEILFLSDVVEELDAAREAGLQTRLIDRLDDYPLPRTGQAANGHERVENFQQIQL.

Belongs to the HAD-like hydrolase superfamily. MasA/MtnC family. Monomer. Mg(2+) is required as a cofactor.

It carries out the reaction 5-methylsulfanyl-2,3-dioxopentyl phosphate + H2O = 1,2-dihydroxy-5-(methylsulfanyl)pent-1-en-3-one + phosphate. The protein operates within amino-acid biosynthesis; L-methionine biosynthesis via salvage pathway; L-methionine from S-methyl-5-thio-alpha-D-ribose 1-phosphate: step 3/6. It participates in amino-acid biosynthesis; L-methionine biosynthesis via salvage pathway; L-methionine from S-methyl-5-thio-alpha-D-ribose 1-phosphate: step 4/6. Functionally, bifunctional enzyme that catalyzes the enolization of 2,3-diketo-5-methylthiopentyl-1-phosphate (DK-MTP-1-P) into the intermediate 2-hydroxy-3-keto-5-methylthiopentenyl-1-phosphate (HK-MTPenyl-1-P), which is then dephosphorylated to form the acireductone 1,2-dihydroxy-3-keto-5-methylthiopentene (DHK-MTPene). The sequence is that of Enolase-phosphatase E1 from Stenotrophomonas maltophilia (strain R551-3).